The primary structure comprises 154 residues: Transcriptional repressor NrdR (154 aa).

A zinc finger spans residues 3–34; the sequence is CPFCSHNDSKVIDSRPTDEGQAIRRRRECISC. Residues 49 to 139 form the ATP-cone domain; it reads LIVVKKNGNR…VYREFKDINT (91 aa).

The protein belongs to the NrdR family. The cofactor is Zn(2+).

In terms of biological role, negatively regulates transcription of bacterial ribonucleotide reductase nrd genes and operons by binding to NrdR-boxes. This chain is Transcriptional repressor NrdR, found in Alkaliphilus oremlandii (strain OhILAs) (Clostridium oremlandii (strain OhILAs)).